Consider the following 21-residue polypeptide: M-lycotoxin-Ls4a (21 aa).

Position 21 is a leucine amide (Leu21).

As to expression, expressed by the venom gland.

Its subcellular location is the secreted. Functionally, may inhibit growth of bacteria. This is M-lycotoxin-Ls4a from Lycosa singoriensis (Wolf spider).